Reading from the N-terminus, the 442-residue chain is GTPase Der (442 aa).

EngA-type G domains are found at residues 2 to 168 (ATVL…EEAG) and 182 to 356 (LKVA…EKID). GTP contacts are provided by residues 8–15 (GRPNVGKS), 55–59 (DTCGL), 118–121 (NKVE), 188–195 (GKPNAGKS), 235–239 (DTAGM), and 301–304 (NKSD). In terms of domain architecture, KH-like spans 357-442 (LRIPTGLLNN…PIFIKLRRKK (86 aa)).

Belongs to the TRAFAC class TrmE-Era-EngA-EngB-Septin-like GTPase superfamily. EngA (Der) GTPase family. In terms of assembly, associates with the 50S ribosomal subunit.

Functionally, GTPase that plays an essential role in the late steps of ribosome biogenesis. The protein is GTPase Der of Kosmotoga olearia (strain ATCC BAA-1733 / DSM 21960 / TBF 19.5.1).